We begin with the raw amino-acid sequence, 215 residues long: uncharacterized protein (215 aa).

2 disordered regions span residues 1 to 144 and 156 to 215; these read MPKG…PYLR and IQGH…GAPA. Composition is skewed to low complexity over residues 16–29, 49–58, 85–96, and 104–127; these read ASTP…ASPT, SSSWPKSPIK, SGSSSPGPSSSR, and STAA…RAAP.

This is an uncharacterized protein from Homo sapiens (Human).